The chain runs to 271 residues: N-acylmannosamine 1-dehydrogenase (271 aa).

20–44 (VTGAAGGIGRATVEAYLREGASVVA) is an NAD(+) binding site. Residue Ser153 participates in substrate binding. Residue Tyr166 is the Proton acceptor of the active site.

This sequence belongs to the short-chain dehydrogenases/reductases (SDR) family.

It catalyses the reaction an N-acyl-D-mannosamine + NAD(+) = an N-acyl-D-mannosaminolactone + NADH + H(+). Its function is as follows. Acts on acetyl-D-mannosamine and glycolyl-D-mannosamine. The protein is N-acylmannosamine 1-dehydrogenase of Flavobacterium sp. (strain 141-8).